Here is a 256-residue protein sequence, read N- to C-terminus: Imidazole glycerol phosphate synthase subunit HisF (256 aa).

Active-site residues include D11 and D130.

This sequence belongs to the HisA/HisF family. As to quaternary structure, heterodimer of HisH and HisF.

The protein localises to the cytoplasm. The enzyme catalyses 5-[(5-phospho-1-deoxy-D-ribulos-1-ylimino)methylamino]-1-(5-phospho-beta-D-ribosyl)imidazole-4-carboxamide + L-glutamine = D-erythro-1-(imidazol-4-yl)glycerol 3-phosphate + 5-amino-1-(5-phospho-beta-D-ribosyl)imidazole-4-carboxamide + L-glutamate + H(+). The protein operates within amino-acid biosynthesis; L-histidine biosynthesis; L-histidine from 5-phospho-alpha-D-ribose 1-diphosphate: step 5/9. In terms of biological role, IGPS catalyzes the conversion of PRFAR and glutamine to IGP, AICAR and glutamate. The HisF subunit catalyzes the cyclization activity that produces IGP and AICAR from PRFAR using the ammonia provided by the HisH subunit. The sequence is that of Imidazole glycerol phosphate synthase subunit HisF from Prochlorococcus marinus (strain AS9601).